The chain runs to 89 residues: Cytochrome b-c1 complex subunit 6, mitochondrial (89 aa).

The transit peptide at 1-13 (MGLEDERKMLTGS) directs the protein to the mitochondrion. Residues 1-27 (MGLEDERKMLTGSGDPKEEEEEELVDP) are disordered. 2 disulfide bridges follow: Cys-35-Cys-79 and Cys-51-Cys-65. Residue Lys-40 is modified to N6-acetyllysine. Lys-83 is modified (N6-acetyllysine).

Belongs to the UQCRH/QCR6 family. In terms of assembly, component of the ubiquinol-cytochrome c oxidoreductase (cytochrome b-c1 complex, complex III, CIII), a multisubunit enzyme composed of 11 subunits. The complex is composed of 3 respiratory subunits cytochrome b, cytochrome c1 and Rieske protein UQCRFS1, 2 core protein subunits UQCRC1/QCR1 and UQCRC2/QCR2, and 6 low-molecular weight protein subunits UQCRH/QCR6, UQCRB/QCR7, UQCRQ/QCR8, UQCR10/QCR9, UQCR11/QCR10 and subunit 9, the cleavage product of Rieske protein UQCRFS1. The complex exists as an obligatory dimer and forms supercomplexes (SCs) in the inner mitochondrial membrane with NADH-ubiquinone oxidoreductase (complex I, CI) and cytochrome c oxidase (complex IV, CIV), resulting in different assemblies (supercomplex SCI(1)III(2)IV(1) and megacomplex MCI(2)III(2)IV(2)).

It is found in the mitochondrion inner membrane. Its function is as follows. Component of the ubiquinol-cytochrome c oxidoreductase, a multisubunit transmembrane complex that is part of the mitochondrial electron transport chain which drives oxidative phosphorylation. The respiratory chain contains 3 multisubunit complexes succinate dehydrogenase (complex II, CII), ubiquinol-cytochrome c oxidoreductase (cytochrome b-c1 complex, complex III, CIII) and cytochrome c oxidase (complex IV, CIV), that cooperate to transfer electrons derived from NADH and succinate to molecular oxygen, creating an electrochemical gradient over the inner membrane that drives transmembrane transport and the ATP synthase. The cytochrome b-c1 complex catalyzes electron transfer from ubiquinol to cytochrome c, linking this redox reaction to translocation of protons across the mitochondrial inner membrane, with protons being carried across the membrane as hydrogens on the quinol. In the process called Q cycle, 2 protons are consumed from the matrix, 4 protons are released into the intermembrane space and 2 electrons are passed to cytochrome c. This chain is Cytochrome b-c1 complex subunit 6, mitochondrial (Uqcrh), found in Rattus norvegicus (Rat).